A 376-amino-acid polypeptide reads, in one-letter code: uncharacterized protein (376 aa).

The signal sequence occupies residues 1–31; sequence MSRHKVYKAISSYVIIAIIIIAIVAVVGVLL. Residues 37–57 form a disordered region; sequence SSSSVTSTTTPTTSSSVSPSS.

The protein belongs to the bacterial solute-binding protein 1 family. WtpA subfamily.

This is an uncharacterized protein from Sulfurisphaera tokodaii (strain DSM 16993 / JCM 10545 / NBRC 100140 / 7) (Sulfolobus tokodaii).